A 556-amino-acid polypeptide reads, in one-letter code: Portal protein (556 aa).

The segment at 527–556 is disordered; it reads AQGAKTLSETQTSDPSALTAIANAAGAPQQ. Residues 533-542 are compositionally biased toward polar residues; that stretch reads LSETQTSDPS.

The protein belongs to the podoviridae head-to-tail connector protein family. As to quaternary structure, homododecamer.

The protein localises to the virion. Functionally, forms the portal vertex of the capsid. This portal plays critical roles in head assembly, genome packaging, neck/tail attachment, and genome ejection. The portal protein multimerizes as a single ring-shaped homododecamer arranged around a central channel. The sequence is that of Portal protein from Salmonella phage epsilon15.